A 424-amino-acid chain; its full sequence is D-inositol 3-phosphate glycosyltransferase (424 aa).

1D-myo-inositol 3-phosphate is bound at residue His-16. UDP-N-acetyl-alpha-D-glucosamine-binding positions include 22–23 and Gly-30; that span reads QP. 1D-myo-inositol 3-phosphate-binding positions include 27–32, Lys-85, Tyr-118, Thr-142, and Arg-162; that span reads DAGGMN. The UDP-N-acetyl-alpha-D-glucosamine site is built by Arg-240 and Lys-245. Mg(2+) is bound by residues Met-313, Arg-314, and Ala-316. Positions 326 and 334 each coordinate UDP-N-acetyl-alpha-D-glucosamine. A Mg(2+)-binding site is contributed by Thr-340.

The protein belongs to the glycosyltransferase group 1 family. MshA subfamily. As to quaternary structure, homodimer.

It catalyses the reaction 1D-myo-inositol 3-phosphate + UDP-N-acetyl-alpha-D-glucosamine = 1D-myo-inositol 2-acetamido-2-deoxy-alpha-D-glucopyranoside 3-phosphate + UDP + H(+). Its function is as follows. Catalyzes the transfer of a N-acetyl-glucosamine moiety to 1D-myo-inositol 3-phosphate to produce 1D-myo-inositol 2-acetamido-2-deoxy-glucopyranoside 3-phosphate in the mycothiol biosynthesis pathway. In Jonesia denitrificans (strain ATCC 14870 / DSM 20603 / BCRC 15368 / CIP 55.134 / JCM 11481 / NBRC 15587 / NCTC 10816 / Prevot 55134) (Listeria denitrificans), this protein is D-inositol 3-phosphate glycosyltransferase.